A 443-amino-acid chain; its full sequence is Thymidine phosphorylase (443 aa).

Belongs to the thymidine/pyrimidine-nucleoside phosphorylase family. As to quaternary structure, homodimer.

It catalyses the reaction thymidine + phosphate = 2-deoxy-alpha-D-ribose 1-phosphate + thymine. It functions in the pathway pyrimidine metabolism; dTMP biosynthesis via salvage pathway; dTMP from thymine: step 1/2. Its function is as follows. The enzymes which catalyze the reversible phosphorolysis of pyrimidine nucleosides are involved in the degradation of these compounds and in their utilization as carbon and energy sources, or in the rescue of pyrimidine bases for nucleotide synthesis. This is Thymidine phosphorylase from Shewanella sp. (strain ANA-3).